Here is a 103-residue protein sequence, read N- to C-terminus: N(4)-acetylcytidine amidohydrolase (103 aa).

Residues 6–94 enclose the ASCH domain; it reads ITFFQRFQND…IAEIYPNQTQ (89 aa). K21 acts as the Proton acceptor in catalysis. T24 serves as the catalytic Nucleophile. The active-site Proton donor is the E74.

Belongs to the N(4)-acetylcytidine amidohydrolase family.

It carries out the reaction N(4)-acetylcytidine + H2O = cytidine + acetate + H(+). The enzyme catalyses N(4)-acetyl-2'-deoxycytidine + H2O = 2'-deoxycytidine + acetate + H(+). It catalyses the reaction N(4)-acetylcytosine + H2O = cytosine + acetate + H(+). In terms of biological role, catalyzes the hydrolysis of N(4)-acetylcytidine (ac4C). The protein is N(4)-acetylcytidine amidohydrolase (yqfB) of Salmonella heidelberg (strain SL476).